The following is a 427-amino-acid chain: Glutamate-1-semialdehyde 2,1-aminomutase (427 aa).

N6-(pyridoxal phosphate)lysine is present on K268.

The protein belongs to the class-III pyridoxal-phosphate-dependent aminotransferase family. HemL subfamily. Requires pyridoxal 5'-phosphate as cofactor.

It is found in the cytoplasm. It catalyses the reaction (S)-4-amino-5-oxopentanoate = 5-aminolevulinate. It participates in porphyrin-containing compound metabolism; protoporphyrin-IX biosynthesis; 5-aminolevulinate from L-glutamyl-tRNA(Glu): step 2/2. This Methanococcus maripaludis (strain C7 / ATCC BAA-1331) protein is Glutamate-1-semialdehyde 2,1-aminomutase.